A 2624-amino-acid polypeptide reads, in one-letter code: Transcription factor TFIIIB component B'' homolog (2624 aa).

Residues 1-142 (MFRRARLSVK…TKEKQPCSDR (142 aa)) are disordered. Positions 1–299 (MFRRARLSVK…TYSSFRKNYY (299 aa)) are interaction with ZBTB43. The segment covering 63–77 (PQEKAPRSSTEKTGG) has biased composition (basic and acidic residues). Low complexity predominate over residues 99–119 (SSTSSLVKSSVSVPSESHPLS). Residues 120-132 (TINQEAPQPTATS) show a composition bias toward polar residues. Positions 133-142 (TKEKQPCSDR) are enriched in basic and acidic residues. Residues 144-177 (RIYKAQKLREMLKEELRKEKKQWKNKYAINESQR) adopt a coiled-coil conformation. Residues 193–241 (LPDNNPMTSSLEQEKKTEKPSTPVQTREQEGKSTPNAEDNEMEEETDDG) are disordered. A compositionally biased stretch (polar residues) spans 212-229 (PSTPVQTREQEGKSTPNA). Residues 230–240 (EDNEMEEETDD) show a composition bias toward acidic residues. Residues 295 to 345 (RKNYYSKPWSNKETDMFFLAISMVGTDFSMIGQLFPHRARIEIKNKFKREE) form the Myb-like domain. The segment at 355-470 (AFQEKRPFDF…QKKRRRKKQD (116 aa)) is required for phosphorylation by CSNK2A1. 4 disordered regions span residues 379 to 449 (EKRK…SRED), 544 to 567 (LSLS…TSDL), 606 to 663 (ENVK…MNTL), and 729 to 759 (EEIG…SRKD). Residues 397-407 (TKPRKNVKVKK) are compositionally biased toward basic residues. Over residues 552–565 (ATSVATESSESSTS) the composition is skewed to low complexity. 2 stretches are compositionally biased toward basic and acidic residues: residues 637–663 (TESE…MNTL) and 736–759 (EKNE…SRKD). A 1; approximate repeat occupies 823 to 877 (GRREISSKEEVLEKILVSGEMAAALRETVRLDTSPKEMVPAEINTKEMQSDLKET). The segment at 823–1327 (GRREISSKEE…PRENELEETS (505 aa)) is 9 X 55 AA repeats of G-R-R-X-I-S-P-X-E-N-G-X-E-E-V-K-P-X-X-E-M-E-T-D-L-K-X-T-G-R-E-X-X-X-R-E-K-T-X-E-X-X-D-A-X-E-E-I-D-X-D-L-E-E-T. 6 consecutive repeat copies span residues 878–932 (GRRA…LEEA), 933–987 (GRRE…LEET), 988–1040 (GRRK…LEET), 1041–1094 (EREV…LEET), 1095–1148 (EREI…LEET), and 1149–1203 (GRRE…LEET). Position 915 is a phosphothreonine (Thr915). Composition is skewed to basic and acidic residues over residues 930–957 (EEAG…ETDL) and 979–1006 (EIDK…KPVD). The tract at residues 930 to 1222 (EEAGRREISP…GPEEVKPVGK (293 aa)) is disordered. Positions 1030-1041 (DATEEIDLEETE) are enriched in acidic residues. Over residues 1052-1079 (EEVKPLGEMETDLKATGRDSFPRGKTPE) the composition is skewed to basic and acidic residues. Residues 1078–1103 (PEVIDAIEEIEIDLEETEREISPQEN) are a coiled coil. Acidic residues predominate over residues 1082–1095 (DAIEEIEIDLEETE). Over residues 1120-1133 (ATGREISPREKTPE) the composition is skewed to basic and acidic residues. Residues 1136–1145 (DATEEIDKDL) show a composition bias toward acidic residues. A compositionally biased stretch (basic and acidic residues) spans 1161–1190 (EEVKPVDEMETDLKTTGREGSSREKTREVI). The segment covering 1194-1204 (EVIETDLEETE) has biased composition (acidic residues). One copy of the 8; approximate repeat lies at 1204–1257 (EREISPQENGPEEVKPVGKMETDLKEIREEISQREKVLAEFSAIREKEIDLKET). Residues 1223-1284 (METDLKEIRE…VEEMEADLKE (62 aa)) are a coiled coil. Residues 1258-1327 (GKRDIPIMEK…PRENELEETS (70 aa)) form a 9; approximate repeat. Residues 1306-1321 (AELKQTGKTDISPREN) are compositionally biased toward basic and acidic residues. Disordered regions lie at residues 1306–1348 (AELK…SAVP), 1365–1440 (TPVE…RFKR), 1519–1543 (TERN…VQKN), 1684–1722 (KAKP…LQKG), 1819–1863 (STSE…ASKA), 2130–2164 (GAEM…ENKD), 2181–2200 (SEVN…QEVH), 2207–2241 (VASS…GDSV), 2444–2501 (FQSR…SRPG), and 2519–2566 (SDEP…PSPS). The segment covering 1326 to 1344 (TSTSRQTDTHLMQSGSNDF) has biased composition (polar residues). The segment covering 1366–1378 (PVEEKRNSEKEVS) has biased composition (basic and acidic residues). Polar residues-rich tracts occupy residues 1379–1390 (SHFSHFKISSQT), 1411–1421 (SDINLSKSLPQ), and 1519–1529 (TERNLSPSNSC). A compositionally biased stretch (basic and acidic residues) spans 1695-1719 (KKEEPVLEKVTTDQSKEGKPEDHLL). Residues 1844–1853 (RGSKRVRGKT) are compositionally biased toward basic residues. Positions 2131 to 2151 (AEMETQRETEKNASKATELEN) are enriched in basic and acidic residues. Over residues 2470–2479 (VSDKEERTDA) the composition is skewed to basic and acidic residues. Over residues 2488-2498 (SRTSSSKASLS) the composition is skewed to low complexity. Residues 2526 to 2544 (HSKKRLKPLIPGLRKKLKR) are compositionally biased toward basic residues.

Component of TFIIIB complex. The TFIIIB complex has two activities, alpha and beta. The TFIIIB-alpha and TFIIIB-beta activities are required for transcription of genes with TFIIIC-bound internal promoters and PSE transcription factor-bound external promoters, respectively. The TFIIIB-alpha activity complex is composed of TBP, BDP1, and a complex containing both BRF2 and at least four stably associated proteins; YY1 facilitates the formation of TFIIIB-alpha activity complex. The TFIIIB-beta activity complex is composed of TBP, BDP1, and BRF1. Interacts with BRF1; this interaction diminishes during mitosis resulting in the release of BDP1 from chromosomal templates. Component of TFIIIC complex. The TFIIIC complex has two activities, C1 and C2. The TFIIIC2 activity complex is only required for transcription of the 'classical' pol III genes whereas the TFIIIC1 activity complex is required for transcription of all pol III genes. The TFIIIC1 activity complex is composed at least of BDP1. Interacts with ZBTB43. In terms of processing, phosphorylated by CSNK2A1 during mitosis, resulting in its release from chromatin and suppression of polymerase III transcription. Isoform 2 is highly expressed in cerebellum.

Its subcellular location is the nucleus. Its function is as follows. General activator of RNA polymerase III transcription. Requires for transcription from all three types of polymerase III promoters. Requires for transcription of genes with internal promoter elements and with promoter elements upstream of the initiation site. In Homo sapiens (Human), this protein is Transcription factor TFIIIB component B'' homolog (BDP1).